Consider the following 755-residue polypeptide: E3 ubiquitin-protein ligase TRIM56 (755 aa).

Residues 21–60 (CKICLEQLRAPKTLPCLHTYCQDCLAQLADGGRVRCPECR) form an RING-type zinc finger. B box-type zinc fingers lie at residues 98 to 149 (KPAC…VVDL) and 164 to 205 (RQAA…CLPL). Residues cysteine 169, histidine 172, cysteine 192, and histidine 197 each coordinate Zn(2+). Positions 216–314 (LEGLLAGVDN…AAAFARRVLS (99 aa)) form a coiled coil. Residues 371 to 484 (EEQQPQKDGG…SPALGPNLDG (114 aa)) form a disordered region. Over residues 392–404 (SQSRREDEPKTER) the composition is skewed to basic and acidic residues. 2 positions are modified to phosphothreonine: threonine 418 and threonine 442. The span at 419–447 (PKEEKAQTTREEGAQTLEEDRAQTPHEDG) shows a compositional bias: basic and acidic residues. The span at 453–469 (RGGRPNKKKKFKGRLKS) shows a compositional bias: basic residues. Serine 475 is subject to Phosphoserine.

Belongs to the TRIM/RBCC family. In terms of assembly, homooligomer. Interacts with STING1. Interacts with TICAM1. (Microbial infection) Preferentially ubiquitinated with 'Lys-48' and 'Lys-11'-linked ubiquitin chains by Salmonella effector SopA leading to proteasomal targeting and degradation. In terms of processing, autoubiquitinated. Widely expressed (at protein level).

The protein resides in the cytoplasm. It catalyses the reaction S-ubiquitinyl-[E2 ubiquitin-conjugating enzyme]-L-cysteine + [acceptor protein]-L-lysine = [E2 ubiquitin-conjugating enzyme]-L-cysteine + N(6)-ubiquitinyl-[acceptor protein]-L-lysine.. It participates in protein modification; protein ubiquitination. Functionally, E3 ubiquitin-protein ligase that plays a key role in innate antiviral immunity by mediating ubiquitination of CGAS and STING1. In response to pathogen- and host-derived double-stranded DNA (dsDNA), targets STING1 to 'Lys-63'-linked ubiquitination, thereby promoting its homodimerization, a step required for the production of type I interferon IFN-beta. Also mediate monoubiquitination of CGAS, thereby promoting CGAS oligomerization and subsequent activation. Promotes also TNFalpha-induced NF-kappa-B signaling by mediating 'Lys-63'-linked ubiquitination TAK1, leading to enhanced interaction between TAK1 and CHUK/IKKalpha. Independently of its E3 ubiquitin ligase activity, positive regulator of TLR3 signaling. Potentiates extracellular double stranded RNA (dsRNA)-induced expression of IFNB1 and interferon-stimulated genes ISG15, IFIT1/ISG56, CXCL10, OASL and CCL5/RANTES. Promotes establishment of an antiviral state by TLR3 ligand and TLR3-mediated chemokine induction following infection by hepatitis C virus. Acts as a restriction factor of Zika virus through direct interaction with the viral RNA via its C-terminal region. This chain is E3 ubiquitin-protein ligase TRIM56, found in Homo sapiens (Human).